The following is a 462-amino-acid chain: Citrate synthase, mitochondrial (462 aa).

The N-terminal 21 residues, 1-21, are a transit peptide targeting the mitochondrion; it reads MRSINQLLKQASLSQKSQYNF. Catalysis depends on residues H300, H346, and D401.

This sequence belongs to the citrate synthase family. Homodimer.

It is found in the mitochondrion matrix. It localises to the cytoplasm. The protein localises to the cytoskeleton. It catalyses the reaction oxaloacetate + acetyl-CoA + H2O = citrate + CoA + H(+). It functions in the pathway carbohydrate metabolism; tricarboxylic acid cycle; isocitrate from oxaloacetate: step 1/2. In terms of biological role, structural protein involved in oral morphogenesis and in pronuclear behavior during conjugation. Respiratory enzyme. The protein is Citrate synthase, mitochondrial of Tetrahymena thermophila.